Here is a 338-residue protein sequence, read N- to C-terminus: UDP-glucose 4-epimerase (338 aa).

Residues Tyr-11–Ile-12, Asp-31–Ser-36, Asp-58–Ile-59, Phe-80–Lys-84, Asn-99, Ser-124, Tyr-149, Lys-153, and Phe-178 each bind NAD(+). 2 residues coordinate substrate: Ser-124 and Tyr-149. Catalysis depends on Tyr-149, which acts as the Proton acceptor. Substrate is bound by residues Asn-179, Asn-199–Leu-200, Ala-216–Phe-218, Arg-231, Arg-292–Asp-295, and Tyr-299.

The protein belongs to the NAD(P)-dependent epimerase/dehydratase family. As to quaternary structure, homodimer. It depends on NAD(+) as a cofactor.

The enzyme catalyses UDP-alpha-D-glucose = UDP-alpha-D-galactose. The protein operates within carbohydrate metabolism; galactose metabolism. In terms of biological role, involved in the metabolism of galactose. Catalyzes the conversion of UDP-galactose (UDP-Gal) to UDP-glucose (UDP-Glc) through a mechanism involving the transient reduction of NAD. This Salmonella typhi protein is UDP-glucose 4-epimerase (galE).